A 384-amino-acid chain; its full sequence is Mitogen-activated protein kinase 8 (384 aa).

The Protein kinase domain maps to 26 to 321 (YQNLRPIGSG…VDEALQHPYI (296 aa)). ATP contacts are provided by residues 33–38 (GSGAQG) and Lys55. The Proton acceptor role is filled by Asp151. A Phosphothreonine modification is found at Thr183. A TXY motif is present at residues 183 to 185 (TPY). Tyr185 is subject to Phosphotyrosine.

The protein belongs to the protein kinase superfamily. CMGC Ser/Thr protein kinase family. MAP kinase subfamily. It depends on Mg(2+) as a cofactor. In terms of processing, dually phosphorylated on Thr-183 and Tyr-185, which activates the enzyme.

The protein localises to the cytoplasm. Its subcellular location is the nucleus. It localises to the synapse. It catalyses the reaction L-seryl-[protein] + ATP = O-phospho-L-seryl-[protein] + ADP + H(+). It carries out the reaction L-threonyl-[protein] + ATP = O-phospho-L-threonyl-[protein] + ADP + H(+). Its activity is regulated as follows. Activated by threonine and tyrosine phosphorylation. Functionally, responds to activation by environmental stress and pro-inflammatory cytokines by phosphorylating a number of transcription factors, primarily components of AP-1 such as c-Jun and ATF2 and thus regulates AP-1 transcriptional activity. May play a role in the regulation of the circadian clock. The sequence is that of Mitogen-activated protein kinase 8 (mapk8) from Danio rerio (Zebrafish).